Reading from the N-terminus, the 385-residue chain is F-box only protein 4 (385 aa).

Residues S11 and S46 each carry the phosphoserine modification. The region spanning 54–100 (TSALTRLPVDVQLYILSFLSPHDLCQLGSTDHYWNKTIRDPILWRYF) is the F-box domain.

In terms of assembly, homodimer. Part of the SCF (SKP1-CUL1-F-box) E3 ubiquitin-protein ligase complex SCF(FBXO4) formed of CUL1, SKP1, RBX1 and FBXO4. Interacts with TERF1; this interaction is prevented in the presence of GNL3L. Identified in a complex with CRYAB and CCND1. In terms of processing, phosphorylation at Ser-11 varies during the cell cycle. It is low in resting cells and high in the S phase and the G2/M phase of the cell cycle. Phosphorylation is decreased during late G1 phase. Phosphorylation at Ser-11 is important for homodimerization and for optimal ubiquitin ligase activity towards CCND1.

The protein localises to the cytoplasm. It participates in protein modification; protein ubiquitination. Substrate recognition component of a SCF (SKP1-CUL1-F-box protein) E3 ubiquitin-protein ligase complex that mediates the ubiquitination and subsequent proteasomal degradation of target proteins. Promotes ubiquitination of cyclin-D1 (CCND1) and its subsequent proteasomal degradation. However, it does not act as a major regulator of CCND1 stability during the G1/S transition. Recognizes TERF1 and promotes its ubiquitination together with UBE2D1. Promotes ubiquitination of FXR1 following phosphorylation of FXR1 by GSK3B, leading to FXR1 degradation by the proteasome. In Mus musculus (Mouse), this protein is F-box only protein 4.